A 681-amino-acid polypeptide reads, in one-letter code: Peroxisomal acyl-coenzyme A oxidase 2 (681 aa).

The disordered stretch occupies residues 1–28; that stretch reads MGNPGDRVSLGETWSREVHPDIDSERHS. At Ser9 the chain carries Phosphoserine. The residue at position 13 (Thr13) is a Phosphothreonine. The segment covering 14-28 has biased composition (basic and acidic residues); the sequence is WSREVHPDIDSERHS. Lys66, Lys137, Lys303, Lys453, Lys561, and Lys667 each carry N6-succinyllysine. A Microbody targeting signal motif is present at residues 679–681; the sequence is PKL.

The protein belongs to the acyl-CoA oxidase family. Homodimer. FAD is required as a cofactor. Acetylation of Lys-667 is observed in liver mitochondria from fasted mice but not from fed mice.

The protein localises to the peroxisome. It catalyses the reaction (25R)-3alpha,7alpha,12alpha-trihydroxy-5beta-cholestan-26-oyl-CoA + A + H2O = (24R,25R)-3alpha,7alpha,12alpha,24-tetrahydroxy-5beta-cholestan-26-oyl-CoA + AH2. The enzyme catalyses (25S)-3alpha,7alpha,12alpha-trihydroxy-5beta-cholestan-26-oyl-CoA + O2 = (24E)-3alpha,7alpha,12alpha-trihydroxy-5beta-cholest-24-en-26-oyl-CoA + H2O2. Oxidizes the CoA esters of the bile acid intermediates di- and tri-hydroxycoprostanic acids. Capable of oxidizing short as well as long chain 2-methyl branched fatty acids. The sequence is that of Peroxisomal acyl-coenzyme A oxidase 2 from Mus musculus (Mouse).